The primary structure comprises 232 residues: Rhamnogalacturonan acetylesterase RhgT (232 aa).

Serine 14 (nucleophile) is an active-site residue. Catalysis depends on residues glutamate 191 and histidine 195.

This sequence belongs to the 'GDSL' lipolytic enzyme family. In terms of assembly, monomer.

Almost completely inhibited by diethylpyrocarbonate at 5 mM and completely inhibited by phenylmethylsulfonyl fluoride (PMSF) at 50 mM. Dimethyl phosphite achieves only a 53% inhibition. Also inhibited by metal ions (magnesium, manganese and calcium) and chelating agent (EDTA) at the same level. Its function is as follows. May play a role in the degradation of type I rhamnogalacturonan derived from plant cell walls. This enzyme has a broad substrate specificity, and shows strong preference for glucose pentaacetate, beta-naphthylacetate, and p-nitrophenyl acetate (pNPA). Also active toward acetylated xylan. This is Rhamnogalacturonan acetylesterase RhgT (rhgT) from Bacillus subtilis (strain 168).